Here is a 349-residue protein sequence, read N- to C-terminus: Glycerol-3-phosphate dehydrogenase [NAD(P)+] (349 aa).

4 residues coordinate NADPH: Trp-20, Arg-43, Arg-44, and Lys-117. Positions 117 and 147 each coordinate sn-glycerol 3-phosphate. Residue Ala-151 participates in NADPH binding. Residues Lys-202, Asp-255, Ser-265, Arg-266, and Asn-267 each coordinate sn-glycerol 3-phosphate. Residue Lys-202 is the Proton acceptor of the active site. Residue Arg-266 participates in NADPH binding. The NADPH site is built by Val-297 and Glu-299.

Belongs to the NAD-dependent glycerol-3-phosphate dehydrogenase family.

Its subcellular location is the cytoplasm. The enzyme catalyses sn-glycerol 3-phosphate + NAD(+) = dihydroxyacetone phosphate + NADH + H(+). It catalyses the reaction sn-glycerol 3-phosphate + NADP(+) = dihydroxyacetone phosphate + NADPH + H(+). It functions in the pathway membrane lipid metabolism; glycerophospholipid metabolism. Catalyzes the reduction of the glycolytic intermediate dihydroxyacetone phosphate (DHAP) to sn-glycerol 3-phosphate (G3P), the key precursor for phospholipid synthesis. This chain is Glycerol-3-phosphate dehydrogenase [NAD(P)+], found in Mycobacterium leprae (strain TN).